The sequence spans 43 residues: Protein PsbN (43 aa).

Residues 4–24 (AIVLSISMAAVVVAITGISIY) form a helical membrane-spanning segment.

Belongs to the PsbN family.

Its subcellular location is the cellular thylakoid membrane. Its function is as follows. May play a role in photosystem I and II biogenesis. The sequence is that of Protein PsbN from Nostoc punctiforme (strain ATCC 29133 / PCC 73102).